Consider the following 281-residue polypeptide: Bifunctional protein FolD 1 (281 aa).

NADP(+)-binding positions include 165-167, Ser190, and Ile231; that span reads GRS.

This sequence belongs to the tetrahydrofolate dehydrogenase/cyclohydrolase family. In terms of assembly, homodimer.

It catalyses the reaction (6R)-5,10-methylene-5,6,7,8-tetrahydrofolate + NADP(+) = (6R)-5,10-methenyltetrahydrofolate + NADPH. The enzyme catalyses (6R)-5,10-methenyltetrahydrofolate + H2O = (6R)-10-formyltetrahydrofolate + H(+). It participates in one-carbon metabolism; tetrahydrofolate interconversion. Its function is as follows. Catalyzes the oxidation of 5,10-methylenetetrahydrofolate to 5,10-methenyltetrahydrofolate and then the hydrolysis of 5,10-methenyltetrahydrofolate to 10-formyltetrahydrofolate. The polypeptide is Bifunctional protein FolD 1 (Desulfitobacterium hafniense (strain Y51)).